The following is a 194-amino-acid chain: Peptidyl-tRNA hydrolase (194 aa).

Position 17 (Tyr-17) interacts with tRNA. His-22 (proton acceptor) is an active-site residue. The tRNA site is built by Phe-68, Asn-70, and Asn-116.

The protein belongs to the PTH family. In terms of assembly, monomer.

The protein resides in the cytoplasm. The catalysed reaction is an N-acyl-L-alpha-aminoacyl-tRNA + H2O = an N-acyl-L-amino acid + a tRNA + H(+). In terms of biological role, hydrolyzes ribosome-free peptidyl-tRNAs (with 1 or more amino acids incorporated), which drop off the ribosome during protein synthesis, or as a result of ribosome stalling. Catalyzes the release of premature peptidyl moieties from peptidyl-tRNA molecules trapped in stalled 50S ribosomal subunits, and thus maintains levels of free tRNAs and 50S ribosomes. The chain is Peptidyl-tRNA hydrolase from Shewanella woodyi (strain ATCC 51908 / MS32).